The sequence spans 603 residues: ATP-dependent zinc metalloprotease FtsH (603 aa).

Over 1-2 (MK) the chain is Stromal. A helical membrane pass occupies residues 3–23 (NLWIWSLPLIVLAFIGWQELA). The Lumenal portion of the chain corresponds to 24–101 (NQMPVATSRM…DVDVHAVSNW (78 aa)). A helical transmembrane segment spans residues 102–122 (INVASNWIIPLIIIGVVIWLL). Over 123–603 (SRSASSNTTG…SQAARLTAVN (481 aa)) the chain is Stromal. 194–201 (GPPGTGKT) is a binding site for ATP. Histidine 415 lines the Zn(2+) pocket. Glutamate 416 is a catalytic residue. 2 residues coordinate Zn(2+): histidine 419 and aspartate 493.

This sequence in the central section; belongs to the AAA ATPase family. It in the C-terminal section; belongs to the peptidase M41 family. Homohexamer. Requires Zn(2+) as cofactor.

Its subcellular location is the plastid. It is found in the chloroplast thylakoid membrane. Its function is as follows. Acts as a processive, ATP-dependent zinc metallopeptidase. This Cyanidioschyzon merolae (strain NIES-3377 / 10D) (Unicellular red alga) protein is ATP-dependent zinc metalloprotease FtsH.